A 141-amino-acid chain; its full sequence is Nucleoside diphosphate kinase (141 aa).

Lysine 11, phenylalanine 59, arginine 87, threonine 93, arginine 104, and asparagine 114 together coordinate ATP. The active-site Pros-phosphohistidine intermediate is the histidine 117.

It belongs to the NDK family. As to quaternary structure, homotetramer. Requires Mg(2+) as cofactor.

It is found in the cytoplasm. It carries out the reaction a 2'-deoxyribonucleoside 5'-diphosphate + ATP = a 2'-deoxyribonucleoside 5'-triphosphate + ADP. It catalyses the reaction a ribonucleoside 5'-diphosphate + ATP = a ribonucleoside 5'-triphosphate + ADP. Functionally, major role in the synthesis of nucleoside triphosphates other than ATP. The ATP gamma phosphate is transferred to the NDP beta phosphate via a ping-pong mechanism, using a phosphorylated active-site intermediate. The chain is Nucleoside diphosphate kinase from Haemophilus influenzae (strain ATCC 51907 / DSM 11121 / KW20 / Rd).